We begin with the raw amino-acid sequence, 860 residues long: DNA mismatch repair protein MutS (860 aa).

606-613 (GPNMSGKS) contacts ATP.

Belongs to the DNA mismatch repair MutS family.

Its function is as follows. This protein is involved in the repair of mismatches in DNA. It is possible that it carries out the mismatch recognition step. This protein has a weak ATPase activity. This is DNA mismatch repair protein MutS from Geobacillus sp. (strain WCH70).